The chain runs to 199 residues: Ribonuclease P protein subunit p25 (199 aa).

The span at 1–11 shows a compositional bias: basic and acidic residues; that stretch reads MENFRKVRSEE. 2 disordered regions span residues 1 to 28 and 144 to 199; these read MENFRKVRSEEAPAGCGAEGGGPGSGPF and LDPR…DQTA. Pro residues predominate over residues 151-166; sequence YQPPNPHPGPSSPPAA. Phosphoserine occurs at positions 172 and 182.

Belongs to the histone-like Alba family. Component of nuclear RNase P and RNase MRP ribonucleoproteins. RNase P consists of a catalytic RNA moiety and 10 different protein chains; POP1, POP4, POP5, POP7, RPP14, RPP21, RPP25, RPP30, RPP38 and RPP40. Within the RNase P complex, POP1, POP7 and RPP25 form the 'finger' subcomplex, POP5, RPP14, RPP40 and homodimeric RPP30 form the 'palm' subcomplex, and RPP21, POP4 and RPP38 form the 'wrist' subcomplex. All subunits of the RNase P complex interact with the catalytic RNA. Several subunits of RNase P are also part of the RNase MRP complex. RNase MRP consists of a catalytic RNA moiety and about 8 protein subunits; POP1, POP7, RPP25, RPP30, RPP38, RPP40 and possibly also POP4 and POP5. POP7 forms a heterodimer with RPP25 that binds to the P3 stem loop of the catalytic RNA.

The protein localises to the nucleus. The protein resides in the nucleolus. Component of ribonuclease P, a ribonucleoprotein complex that generates mature tRNA molecules by cleaving their 5'-ends. Also a component of the MRP ribonuclease complex, which cleaves pre-rRNA sequences. This Homo sapiens (Human) protein is Ribonuclease P protein subunit p25 (RPP25).